A 546-amino-acid polypeptide reads, in one-letter code: Chaperonin GroEL (546 aa).

Residues 30–33, Lys51, 87–91, Gly415, and Asp495 contribute to the ATP site; these read TLGP and DGTTT.

This sequence belongs to the chaperonin (HSP60) family. In terms of assembly, forms a cylinder of 14 subunits composed of two heptameric rings stacked back-to-back. Interacts with the co-chaperonin GroES.

The protein resides in the cytoplasm. The enzyme catalyses ATP + H2O + a folded polypeptide = ADP + phosphate + an unfolded polypeptide.. Its function is as follows. Together with its co-chaperonin GroES, plays an essential role in assisting protein folding. The GroEL-GroES system forms a nano-cage that allows encapsulation of the non-native substrate proteins and provides a physical environment optimized to promote and accelerate protein folding. This is Chaperonin GroEL from Brucella ovis (strain ATCC 25840 / 63/290 / NCTC 10512).